A 263-amino-acid polypeptide reads, in one-letter code: NADH dehydrogenase [ubiquinone] iron-sulfur protein 3, mitochondrial (263 aa).

Residues 1–35 constitute a mitochondrion transit peptide; it reads MVAAVARLWWRGLLGASALTRGAGRPSVLLLPVRR.

This sequence belongs to the complex I 30 kDa subunit family. In terms of assembly, core subunit of respiratory chain NADH dehydrogenase (Complex I) which is composed of 45 different subunits. Interacts with NDUFAF3. Interacts with RAB5IF. Found in subcomplexes containing subunits NDUFS2, MT-ND1 and NDUFA13.

The protein localises to the mitochondrion inner membrane. It catalyses the reaction a ubiquinone + NADH + 5 H(+)(in) = a ubiquinol + NAD(+) + 4 H(+)(out). Functionally, core subunit of the mitochondrial membrane respiratory chain NADH dehydrogenase (Complex I) which catalyzes electron transfer from NADH through the respiratory chain, using ubiquinone as an electron acceptor. Essential for the catalytic activity and assembly of complex I. This chain is NADH dehydrogenase [ubiquinone] iron-sulfur protein 3, mitochondrial (NDUFS3), found in Gorilla gorilla gorilla (Western lowland gorilla).